A 134-amino-acid chain; its full sequence is Putative integral membrane protein YxzK (134 aa).

Helical transmembrane passes span 3 to 23 (VIRI…GEAI), 35 to 55 (IVGL…VSII), 58 to 78 (GAGF…TGVI), and 89 to 109 (LMLL…AGFA).

Its subcellular location is the cell membrane. This is Putative integral membrane protein YxzK (yxzK) from Bacillus subtilis (strain 168).